A 321-amino-acid chain; its full sequence is MSLVCSLSCVAPLPQTKQSRPSFLKLETCTLSLSSPAGYPNFTTGIRKHISYLFTEPIKLPRLAKSRILVSQESFTETSTIDMDWEDQEEIEDTGSPWEGSVMYRRNASVTHVEYCTTLERLGLGRLSTDVSKKRASAMGLRVTKDVKDYPDGTPVQVSVDVIRKKKKLRLDGIVRTVITLGCNRCGESTGESIFSNFSLLLTEEPVEEPDVIDLGFTFGNDKEEGEDDDDNDDSWIDWEDKLHFPPEVKEIDISKHIRDLVHLEITITAICDSACKGMCLKCGANLNKRKCDCGREEKDKGYGPLGNLREQMQQKEGLRN.

The N-terminal 32 residues, 1 to 32, are a transit peptide targeting the chloroplast; sequence MSLVCSLSCVAPLPQTKQSRPSFLKLETCTLS.

It belongs to the DUF177 domain family.

It is found in the plastid. The protein resides in the chloroplast stroma. It localises to the chloroplast nucleoid. In terms of biological role, plays a role in synthesis, processing and/or stability of 23S rRNA. Required for embryogenesis. This Arabidopsis thaliana (Mouse-ear cress) protein is Large ribosomal RNA subunit accumulation protein YCED homolog 1, chloroplastic.